The primary structure comprises 505 residues: Aspartyl/glutamyl-tRNA(Asn/Gln) amidotransferase subunit B (505 aa).

The protein belongs to the GatB/GatE family. GatB subfamily. Heterotrimer of A, B and C subunits.

It carries out the reaction L-glutamyl-tRNA(Gln) + L-glutamine + ATP + H2O = L-glutaminyl-tRNA(Gln) + L-glutamate + ADP + phosphate + H(+). The catalysed reaction is L-aspartyl-tRNA(Asn) + L-glutamine + ATP + H2O = L-asparaginyl-tRNA(Asn) + L-glutamate + ADP + phosphate + 2 H(+). Its function is as follows. Allows the formation of correctly charged Asn-tRNA(Asn) or Gln-tRNA(Gln) through the transamidation of misacylated Asp-tRNA(Asn) or Glu-tRNA(Gln) in organisms which lack either or both of asparaginyl-tRNA or glutaminyl-tRNA synthetases. The reaction takes place in the presence of glutamine and ATP through an activated phospho-Asp-tRNA(Asn) or phospho-Glu-tRNA(Gln). This Dinoroseobacter shibae (strain DSM 16493 / NCIMB 14021 / DFL 12) protein is Aspartyl/glutamyl-tRNA(Asn/Gln) amidotransferase subunit B.